A 199-amino-acid chain; its full sequence is Pathogenesis-related 5 protein Cup a 3 (199 aa).

Cystine bridges form between cysteine 9/cysteine 198, cysteine 50/cysteine 60, cysteine 65/cysteine 71, cysteine 113/cysteine 187, cysteine 118/cysteine 171, cysteine 126/cysteine 136, cysteine 140/cysteine 149, and cysteine 150/cysteine 158.

The protein belongs to the thaumatin family. As to expression, expressed in pollen.

The protein localises to the secreted. Its subcellular location is the extracellular space. It localises to the extracellular matrix. It is found in the pollen coat. The protein resides in the cytoplasm. The protein localises to the nucleus. Its subcellular location is the mitochondrion. It localises to the endoplasmic reticulum. It is found in the golgi apparatus. The protein resides in the golgi stack. The protein localises to the vesicle. Its subcellular location is the vacuole. The sequence is that of Pathogenesis-related 5 protein Cup a 3 from Hesperocyparis arizonica (Arizona cypress).